The chain runs to 227 residues: Protein LppM (227 aa).

An N-terminal signal peptide occupies residues 1–24; sequence MARTRRRGMLAIAMLLMLVPLATG. A lipid anchor (N-palmitoyl cysteine) is attached at cysteine 25. Cysteine 25 is lipidated: S-diacylglycerol cysteine. Residues 26-185 form an important for bacterial uptake by host macrophages region; it reads LRVRASITIS…ARYTDPNTRS (160 aa). Residues 190–210 form a helical membrane-spanning segment; the sequence is GIWLGIAAFAAAGVVAVLAWI.

In terms of processing, a shorter form (about 20 kDa) is secreted; upon overexpression of the whole protein in M.smegmatis the C-terminus of the short form is about residue 187, suggesting it is generated by cleavage of the protein before its C-terminal transmembrane domain.

The protein localises to the membrane. It is found in the secreted. Its subcellular location is the cell wall. Functionally, a putative lipoprotein that seems to be specialized for the initial steps of macrophage infection. A non-acylated fragment (residues 26-185) binds phosphatidyl-myo-inositol mannosides (PIMs). Limits, in a TLR2-dependent fashion, bacterial uptake by host (mouse); this effect may be mediated by nonacylated fragment 26-185. Plays a TLR2-dependent role in host phagosome maturation arrest. Plays a TLR2-independent role in chemokine production during the first 24 hours of mouse infection. The polypeptide is Protein LppM (lppM) (Mycobacterium tuberculosis (strain ATCC 25618 / H37Rv)).